The primary structure comprises 373 residues: XK-related protein 9 (373 aa).

8 helical membrane-spanning segments follow: residues 8-28 (FMMS…DIWV), 38-58 (YVFS…AQCF), 166-186 (AAIM…QVAL), 203-223 (ITYL…VVLL), 224-244 (LFLN…LGII), 256-276 (CISM…FTFF), 295-315 (VLGT…IFNP), and 318-338 (FIPI…FLIV).

The protein belongs to the XK family. In terms of processing, undergoes proteolytic processing by caspase-3 (CASP3), caspase-6 (CASP6) and caspase-7 (CASP7) to generate the XK-related protein 9, processed form, leading to its activation.

It is found in the cell membrane. It catalyses the reaction a 1,2-diacyl-sn-glycero-3-phospho-L-serine(in) = a 1,2-diacyl-sn-glycero-3-phospho-L-serine(out). Activated upon caspase cleavage to generate the XK-related protein 9, processed form. Does not act prior the onset of apoptosis. Functionally, phospholipid scramblase that promotes phosphatidylserine exposure on apoptotic cell surface. Phosphatidylserine is a specific marker only present at the surface of apoptotic cells and acts as a specific signal for engulfment. This is XK-related protein 9 from Homo sapiens (Human).